A 159-amino-acid polypeptide reads, in one-letter code: Thioredoxin O2, mitochondrial (159 aa).

Position 40 is a phosphoserine (serine 40). The Thioredoxin domain maps to 43–159 (FAEGDRSSFV…LKSVMEQLYK (117 aa)). Catalysis depends on nucleophile residues cysteine 83 and cysteine 86. An intrachain disulfide couples cysteine 83 to cysteine 86.

It belongs to the thioredoxin family. Plant O-type subfamily.

The protein resides in the mitochondrion. Thiol-disulfide oxidoreductase that may participate in various redox reactions. Possesses insulin disulfide bonds reducing activity. Reduced by thioredoxin reductases NTRA and NTRB. This is Thioredoxin O2, mitochondrial from Arabidopsis thaliana (Mouse-ear cress).